A 581-amino-acid polypeptide reads, in one-letter code: Probable peptidoglycan D,D-transpeptidase PenA (581 aa).

The helical transmembrane segment at 28 to 48 threads the bilayer; it reads ISFVLMAIAVLFAGLIARGLY. S310 serves as the catalytic Acyl-ester intermediate.

It belongs to the transpeptidase family. FtsI subfamily.

It is found in the cell inner membrane. The catalysed reaction is Preferential cleavage: (Ac)2-L-Lys-D-Ala-|-D-Ala. Also transpeptidation of peptidyl-alanyl moieties that are N-acyl substituents of D-alanine.. The protein operates within cell wall biogenesis; peptidoglycan biosynthesis. In terms of biological role, catalyzes cross-linking of the peptidoglycan cell wall at the division septum. This Neisseria meningitidis serogroup A / serotype 4A (strain DSM 15465 / Z2491) protein is Probable peptidoglycan D,D-transpeptidase PenA.